A 440-amino-acid chain; its full sequence is Oligodendrocyte-myelin glycoprotein (440 aa).

Residues 1–24 (MEYQILKMSLCLFILLFLTPGILC) form the signal peptide. The 31-residue stretch at 25 to 55 (ICPLQCICTERHRHVDCSGRNLSTLPSGLQE) folds into the LRRNT domain. N-linked (GlcNAc...) asparagine glycosylation is found at Asn-45 and Asn-61. LRR repeat units follow at residues 56-77 (NIIHLNLSYNHFTDLHNQLTQY), 79-100 (NLRTLDISNNRLESLPAHLPRS), 101-121 (LWNMSAANNNIKLLDKSDTAY), 124-145 (NLKYLDVSKNMLEKVVLIKNTL), 147-168 (SLEVLNLSSNKLWTVPTNMPSK), 169-189 (LHIVDLSNNSLTQILPGTLIN), 192-213 (NLTHLYLHNNKFTFIPDQSFDQ), and 216-239 (QLQEITLYNNRWSCDHKQNITYLL). N-linked (GlcNAc...) asparagine glycosylation occurs at Asn-103. Asn-152, Asn-176, Asn-189, Asn-192, and Asn-234 each carry an N-linked (GlcNAc...) asparagine glycan. Ser/Thr-rich repeat units follow at residues 229 to 270 (CDHK…YPTP), 271 to 292 (SGFTSSLFTVSGMQTVDTINSL), 293 to 335 (SVVT…VPYP), 336 to 377 (EDTS…SPTP), and 378 to 416 (MTLSITSGMPNNFSEMPQQSTTLNLWREETTTNVKTPLP). Residues Asn-364 and Asn-389 are each glycosylated (N-linked (GlcNAc...) asparagine). A lipid anchor (GPI-anchor amidated serine) is attached at Ser-417. Residues 418-440 (VANAWKVNASFLLLLNVVVMLAV) constitute a propeptide, removed in mature form. Asn-425 carries N-linked (GlcNAc...) asparagine glycosylation.

Binds to RTN4R. O-glycosylated in its Ser/Thr-rich repeat domain. As to expression, oligodendrocytes and myelin of the central nervous system.

The protein localises to the cell membrane. In terms of biological role, cell adhesion molecule contributing to the interactive process required for myelination in the central nervous system. The sequence is that of Oligodendrocyte-myelin glycoprotein (OMG) from Homo sapiens (Human).